Consider the following 1298-residue polypeptide: Phosphoribosylformylglycinamidine synthase (1298 aa).

The segment at 298–328 (TAIAPFPGASTGSGGEIRDEGATGRGAKPKA) is disordered. ATP-binding positions include 305-316 (GASTGSGGEIRD), 384-386 (TGY), and Ala-676. Mg(2+)-binding residues include Asp-677, Glu-716, Asn-720, and Asp-884. Position 886 (Ser-886) interacts with ATP. In terms of domain architecture, Glutamine amidotransferase type-1 spans 1045–1298 (VAILREQGVN…MFRNARVWVD (254 aa)). Residue Cys-1138 is the Nucleophile of the active site. Catalysis depends on residues His-1263 and Glu-1265.

In the N-terminal section; belongs to the FGAMS family. In terms of assembly, monomer.

Its subcellular location is the cytoplasm. The enzyme catalyses N(2)-formyl-N(1)-(5-phospho-beta-D-ribosyl)glycinamide + L-glutamine + ATP + H2O = 2-formamido-N(1)-(5-O-phospho-beta-D-ribosyl)acetamidine + L-glutamate + ADP + phosphate + H(+). The protein operates within purine metabolism; IMP biosynthesis via de novo pathway; 5-amino-1-(5-phospho-D-ribosyl)imidazole from N(2)-formyl-N(1)-(5-phospho-D-ribosyl)glycinamide: step 1/2. Phosphoribosylformylglycinamidine synthase involved in the purines biosynthetic pathway. Catalyzes the ATP-dependent conversion of formylglycinamide ribonucleotide (FGAR) and glutamine to yield formylglycinamidine ribonucleotide (FGAM) and glutamate. The chain is Phosphoribosylformylglycinamidine synthase from Pseudomonas aeruginosa (strain ATCC 15692 / DSM 22644 / CIP 104116 / JCM 14847 / LMG 12228 / 1C / PRS 101 / PAO1).